The sequence spans 197 residues: HTH-type transcriptional regulator BetI (197 aa).

In terms of domain architecture, HTH tetR-type spans 8–68 (PIRRQQLIEA…ATMRYLMSVL (61 aa)). Residues 31 to 50 (SIALIARLAGVSNGIISHYF) constitute a DNA-binding region (H-T-H motif).

The protein operates within amine and polyamine biosynthesis; betaine biosynthesis via choline pathway [regulation]. Repressor involved in the biosynthesis of the osmoprotectant glycine betaine. It represses transcription of the choline transporter BetT and the genes of BetAB involved in the synthesis of glycine betaine. This Pseudomonas fluorescens (strain Pf0-1) protein is HTH-type transcriptional regulator BetI.